A 64-amino-acid polypeptide reads, in one-letter code: MPKMKTRKAVASKFRVTATGKLKASRPGRRHKLTGKTPKRKRQLRRPGLVDDGHLKTYKRLMCL.

The segment at 19–44 is disordered; sequence TGKLKASRPGRRHKLTGKTPKRKRQL. Basic residues predominate over residues 23–44; that stretch reads KASRPGRRHKLTGKTPKRKRQL.

Belongs to the bacterial ribosomal protein bL35 family.

This Protochlamydia amoebophila (strain UWE25) protein is Large ribosomal subunit protein bL35.